The chain runs to 755 residues: Sentrin-specific protease 5 (755 aa).

The disordered stretch occupies residues 268 to 321 (VQKVTGDHQETRRENGEGGSCSPFPSPEPKDPSCRHQPYFPDMDSSAVVKGTNS). Residues 272–283 (TGDHQETRRENG) show a composition bias toward basic and acidic residues. Positions 567 to 724 (HMLDMDDLAT…VFVLQYCKCL (158 aa)) are protease. Active-site residues include His-646, Asp-663, and Cys-713.

Belongs to the peptidase C48 family. Interacts with CCAR2.

The protein resides in the nucleus. Its subcellular location is the nucleolus. In terms of biological role, protease that catalyzes two essential functions in the SUMO pathway: processing of full-length SUMO3 to its mature form and deconjugation of SUMO2 and SUMO3 from targeted proteins. Has weak proteolytic activity against full-length SUMO1 or SUMO1 conjugates. Required for cell division. This Homo sapiens (Human) protein is Sentrin-specific protease 5 (SENP5).